A 156-amino-acid chain; its full sequence is Small ribosomal subunit protein uS7 (156 aa).

This sequence belongs to the universal ribosomal protein uS7 family. In terms of assembly, part of the 30S ribosomal subunit. Contacts proteins S9 and S11.

One of the primary rRNA binding proteins, it binds directly to 16S rRNA where it nucleates assembly of the head domain of the 30S subunit. Is located at the subunit interface close to the decoding center, probably blocks exit of the E-site tRNA. The protein is Small ribosomal subunit protein uS7 of Solidesulfovibrio magneticus (strain ATCC 700980 / DSM 13731 / RS-1) (Desulfovibrio magneticus).